We begin with the raw amino-acid sequence, 101 residues long: Small ribosomal subunit protein uS14 (101 aa).

It belongs to the universal ribosomal protein uS14 family. Part of the 30S ribosomal subunit. Contacts proteins S3 and S10.

Its function is as follows. Binds 16S rRNA, required for the assembly of 30S particles and may also be responsible for determining the conformation of the 16S rRNA at the A site. This chain is Small ribosomal subunit protein uS14, found in Leptothrix cholodnii (strain ATCC 51168 / LMG 8142 / SP-6) (Leptothrix discophora (strain SP-6)).